Here is a 258-residue protein sequence, read N- to C-terminus: Small ribosomal subunit protein uS2 (258 aa).

Belongs to the universal ribosomal protein uS2 family.

The sequence is that of Small ribosomal subunit protein uS2 from Leuconostoc mesenteroides subsp. mesenteroides (strain ATCC 8293 / DSM 20343 / BCRC 11652 / CCM 1803 / JCM 6124 / NCDO 523 / NBRC 100496 / NCIMB 8023 / NCTC 12954 / NRRL B-1118 / 37Y).